The following is a 141-amino-acid chain: ATP synthase epsilon chain (141 aa).

The protein belongs to the ATPase epsilon chain family. In terms of assembly, F-type ATPases have 2 components, CF(1) - the catalytic core - and CF(0) - the membrane proton channel. CF(1) has five subunits: alpha(3), beta(3), gamma(1), delta(1), epsilon(1). CF(0) has three main subunits: a, b and c.

The protein resides in the cell membrane. In terms of biological role, produces ATP from ADP in the presence of a proton gradient across the membrane. The sequence is that of ATP synthase epsilon chain (atpC) from Mycoplasmopsis pulmonis (strain UAB CTIP) (Mycoplasma pulmonis).